Consider the following 264-residue polypeptide: Phosphonoacetaldehyde hydrolase (264 aa).

The active-site Nucleophile is Asp-9. The Mg(2+) site is built by Asp-9 and Ala-11. Lys-50 serves as the catalytic Schiff-base intermediate with substrate. Asp-183 serves as a coordination point for Mg(2+).

It belongs to the HAD-like hydrolase superfamily. PhnX family. Homodimer. Requires Mg(2+) as cofactor.

The catalysed reaction is phosphonoacetaldehyde + H2O = acetaldehyde + phosphate + H(+). Functionally, involved in phosphonate degradation. This Bacillus anthracis protein is Phosphonoacetaldehyde hydrolase.